A 158-amino-acid chain; its full sequence is Cytochrome b6-f complex subunit 4 (158 aa).

3 helical membrane passes run 34-54 (LLYI…GLAV), 93-113 (LLGV…PFLE), and 129-149 (TVFL…TLPI).

This sequence belongs to the cytochrome b family. PetD subfamily. In terms of assembly, the 4 large subunits of the cytochrome b6-f complex are cytochrome b6, subunit IV (17 kDa polypeptide, petD), cytochrome f and the Rieske protein, while the 4 small subunits are petG, petL, petM and petN. The complex functions as a dimer.

The protein localises to the plastid. The protein resides in the chloroplast thylakoid membrane. Its function is as follows. Component of the cytochrome b6-f complex, which mediates electron transfer between photosystem II (PSII) and photosystem I (PSI), cyclic electron flow around PSI, and state transitions. The chain is Cytochrome b6-f complex subunit 4 from Liriodendron tulipifera (Tuliptree).